Here is a 505-residue protein sequence, read N- to C-terminus: tRNA-2-methylthio-N(6)-dimethylallyladenosine synthase (505 aa).

Residues 1 to 39 (MGQKAKAQAPTTHPRPHTLSSQVAPALPRRPRHAAPESL) are disordered. The region spanning 47 to 162 (MKAHLITYGC…IGAALESNER (116 aa)) is the MTTase N-terminal domain. Positions 56, 92, 125, 194, 198, and 201 each coordinate [4Fe-4S] cluster. The Radical SAM core domain maps to 180 to 413 (PSGKLQAHLT…IARQKDWSAR (234 aa)). The TRAM domain occupies 416–479 (AQKVGTVQQV…PHMMYGHILG (64 aa)).

The protein belongs to the methylthiotransferase family. MiaB subfamily. Monomer. [4Fe-4S] cluster serves as cofactor.

It localises to the cytoplasm. It catalyses the reaction N(6)-dimethylallyladenosine(37) in tRNA + (sulfur carrier)-SH + AH2 + 2 S-adenosyl-L-methionine = 2-methylsulfanyl-N(6)-dimethylallyladenosine(37) in tRNA + (sulfur carrier)-H + 5'-deoxyadenosine + L-methionine + A + S-adenosyl-L-homocysteine + 2 H(+). In terms of biological role, catalyzes the methylthiolation of N6-(dimethylallyl)adenosine (i(6)A), leading to the formation of 2-methylthio-N6-(dimethylallyl)adenosine (ms(2)i(6)A) at position 37 in tRNAs that read codons beginning with uridine. The chain is tRNA-2-methylthio-N(6)-dimethylallyladenosine synthase from Deinococcus radiodurans (strain ATCC 13939 / DSM 20539 / JCM 16871 / CCUG 27074 / LMG 4051 / NBRC 15346 / NCIMB 9279 / VKM B-1422 / R1).